The primary structure comprises 351 residues: Methylthioribose-1-phosphate isomerase (351 aa).

Substrate contacts are provided by residues 51-53 (RGA), R94, and Q199. The Proton donor role is filled by D240. 250 to 251 (NK) provides a ligand contact to substrate.

It belongs to the EIF-2B alpha/beta/delta subunits family. MtnA subfamily. In terms of assembly, homodimer.

It catalyses the reaction 5-(methylsulfanyl)-alpha-D-ribose 1-phosphate = 5-(methylsulfanyl)-D-ribulose 1-phosphate. The protein operates within amino-acid biosynthesis; L-methionine biosynthesis via salvage pathway; L-methionine from S-methyl-5-thio-alpha-D-ribose 1-phosphate: step 1/6. Functionally, catalyzes the interconversion of methylthioribose-1-phosphate (MTR-1-P) into methylthioribulose-1-phosphate (MTRu-1-P). This is Methylthioribose-1-phosphate isomerase from Bacillus anthracis.